Reading from the N-terminus, the 351-residue chain is Transmembrane protein 185-like (351 aa).

A run of 8 helical transmembrane segments spans residues 16-36 (LIYACLLLFSVLLSLRLDGII), 41-61 (WAVFAPIWLWKLMVIIGASVG), 81-101 (FKAMLIAVGIHLLLLTFEVLV), 113-133 (WLLVFMPLFFVSPVSVAACVW), 154-174 (FIFIALKLDGIISWPWLVVCV), 178-198 (ILMSFLCLVVLYYIVWSVLFL), 212-232 (ITMAISWMTIVVPLLTFEILL), and 244-264 (YVPVFVPLWVSLVTLMVTTFG).

This sequence belongs to the TMEM185 family.

Its subcellular location is the membrane. This chain is Transmembrane protein 185-like, found in Danio rerio (Zebrafish).